The sequence spans 85 residues: MKLFLLLVISASMLIDGLVNADGYIRGSNGCKVSCLLGNEGCNKECRAYGASYGYCWTWKLACWCQGLPDDKTWKSESNTCGGKK.

The first 21 residues, 1 to 21 (MKLFLLLVISASMLIDGLVNA), serve as a signal peptide directing secretion. The region spanning 22 to 82 (DGYIRGSNGC…TWKSESNTCG (61 aa)) is the LCN-type CS-alpha/beta domain. Intrachain disulfides connect Cys31–Cys81, Cys35–Cys56, Cys42–Cys63, and Cys46–Cys65. The residue at position 82 (Gly82) is a Glycine amide.

As to expression, expressed by the venom gland.

It localises to the secreted. In terms of biological role, shows anti-epileptic activity. Shares high homology with depressant insect toxins, but shows very weak toxicity against mammals and insects and no obvious symptoms on insect larvae. May target voltage-gated sodium channel (Nav). The polypeptide is Toxin BmKAEP (Olivierus martensii (Manchurian scorpion)).